The primary structure comprises 367 residues: HTH-type transcriptional regulator GbdR (367 aa).

One can recognise an HTH araC/xylS-type domain in the interval 227–325 (QEIVALMEAN…GIPPRDERQG (99 aa)). DNA-binding regions (H-T-H motif) lie at residues 244–265 (DELA…QKYL) and 292–315 (IIEV…REYF).

Functionally, specific regulator of choline metabolism, which activates transcription of at least 25 genes from 11 promoters in response to choline metabolites. Required for the induction of plcH, encoding the phospholipase C, and pchP, encoding the phosphorylcholine phosphatase, in response to glycine betaine (GB) and dimethylglycine (DMG). Also controls the expression of gbcAB and dgcAB, which are required for GB and DMG degradation, respectively, in response to both GB and DMG. The GbdR regulon also includes genes encoding sarcosine, glycine and serine catabolic enzymes, the BetX and CbcXWV quaternary amine transport proteins and the acetylcholine esterase gene, choE. Acts by binding directly to the promoter region of the genes. May play an important role during P.aeruginosa interactions with eukaryotes. This is HTH-type transcriptional regulator GbdR from Pseudomonas aeruginosa (strain UCBPP-PA14).